A 954-amino-acid chain; its full sequence is cGMP-specific 3',5'-cyclic phosphodiesterase alpha (954 aa).

Over M1–K259 the chain is Cytoplasmic. The chain crosses the membrane as a helical span at residues L260–F280. The Extracellular portion of the chain corresponds to M281–S296. The helical transmembrane segment at V297–L317 threads the bilayer. The Cytoplasmic segment spans residues R318–Y327. Residues S328–F348 traverse the membrane as a helical segment. Over K349–N365 the chain is Extracellular. The chain crosses the membrane as a helical span at residues F366–F386. The Cytoplasmic portion of the chain corresponds to L387–R401. Residues F402 to F422 form a helical membrane-spanning segment. Residues Y423–N432 are Extracellular-facing. The chain crosses the membrane as a helical span at residues F433 to M453. At S454–E954 the chain is on the cytoplasmic side. The PDEase domain maps to N586–N930. H680 (proton donor) is an active-site residue. H680 to H684 serves as a coordination point for 3',5'-cyclic GMP. Positions 684, 720, 721, and 832 each coordinate Zn(2+). Residues D721, D832, and Q884 each contribute to the 3',5'-cyclic GMP site. D721 contributes to the Mg(2+) binding site.

This sequence belongs to the cyclic nucleotide phosphodiesterase family. The cofactor is Zn(2+). Mg(2+) is required as a cofactor.

The protein localises to the membrane. It carries out the reaction 3',5'-cyclic GMP + H2O = GMP + H(+). Its pathway is purine metabolism; 3',5'-cyclic GMP degradation; GMP from 3',5'-cyclic GMP: step 1/1. Its activity is regulated as follows. Not inhibited by cAMP. Inhibited by zaprinast. Functionally, specifically hydrolyzes the second messenger cGMP, which is a key regulator of many important physiological processes. The sequence is that of cGMP-specific 3',5'-cyclic phosphodiesterase alpha from Plasmodium falciparum (isolate 3D7).